We begin with the raw amino-acid sequence, 328 residues long: CCAAT/enhancer-binding protein beta (328 aa).

Arg3 carries the post-translational modification Asymmetric dimethylarginine; by CARM1. Lys39 carries the post-translational modification N6-methylated lysine. The segment at 165–274 (DSCKGPRKEE…NIAVRKSRDK (110 aa)) is disordered. The span at 200-231 (SVPSGSSGNLSTSSSSSPPGTPNPSESSKSAA) shows a compositional bias: low complexity. The residue at position 220 (Thr220) is a Phosphothreonine; by RPS6KA1, CDK2 and MAPK. Residues 248 to 264 (KCVDKHSDEYKLRRERN) are compositionally biased toward basic and acidic residues. Residues 254–317 (SDEYKLRRER…STLRNLFKQL (64 aa)) enclose the bZIP domain. Residues 258 to 278 (KLRRERNNIAVRKSRDKAKMR) form a basic motif region. Positions 280-287 (LETQHKVL) are leucine-zipper.

It belongs to the bZIP family. C/EBP subfamily. As to quaternary structure, binds DNA as a dimer. Interacts (not methylated) with MED23, MED26, SMARCA2, SMARCB1 and SMARCC1. In terms of processing, methylated. Methylation at Arg-3 by CARM1 and at Lys-39 by EHMT2, inhibit transactivation activity. Methylation is probably inhibited by phosphorylation at Thr-220. Specifically expressed in myelomoncytic cells.

It localises to the nucleus. In terms of biological role, important transcriptional activator regulating the expression of genes involved in immune and inflammatory responses. Binds to regulatory regions of several acute-phase and cytokines genes and probably plays a role in the regulation of acute-phase reaction, inflammation and hemopoiesis. The consensus recognition site is 5'-T[TG]NNGNAA[TG]-3'. Functions in brown adipose tissue (BAT) differentiation. Regulates the transcriptional induction of peroxisome proliferator-activated receptor gamma (PPARG). Binds to the MGF and MIM-1 promoters and activates the transcription of these genes. Functionally, important transcription factor regulating the expression of genes involved in immune and inflammatory responses. Also plays a significant role in adipogenesis, as well as in the gluconeogenic pathway, liver regeneration, and hematopoiesis. The consensus recognition site is 5'-T[TG]NNGNAA[TG]-3'. Its functional capacity is governed by protein interactions and post-translational protein modifications. In Gallus gallus (Chicken), this protein is CCAAT/enhancer-binding protein beta (CEBPB).